The sequence spans 113 residues: U11-theraphotoxin-Hhn1f (113 aa).

The signal sequence occupies residues methionine 1 to alanine 21. Residues aspartate 22–arginine 74 constitute a propeptide that is removed on maturation. Residues glutamate 61–cysteine 82 are disordered. Cystine bridges form between cysteine 75/cysteine 90, cysteine 82/cysteine 95, and cysteine 89/cysteine 110.

It belongs to the neurotoxin 14 (magi-1) family. 01 (HNTX-16) subfamily. In terms of tissue distribution, expressed by the venom gland.

The protein resides in the secreted. Functionally, probable ion channel inhibitor. This Cyriopagopus hainanus (Chinese bird spider) protein is U11-theraphotoxin-Hhn1f.